The sequence spans 512 residues: Cytochrome P450 26B1 (512 aa).

A heme-binding site is contributed by C441.

This sequence belongs to the cytochrome P450 family. It depends on heme as a cofactor.

It is found in the endoplasmic reticulum membrane. Its subcellular location is the microsome membrane. It catalyses the reaction all-trans-retinoate + reduced [NADPH--hemoprotein reductase] + O2 = all-trans-4-hydroxyretinoate + oxidized [NADPH--hemoprotein reductase] + H2O + H(+). The enzyme catalyses all-trans-retinoate + reduced [NADPH--hemoprotein reductase] + O2 = all-trans-18-hydroxyretinoate + oxidized [NADPH--hemoprotein reductase] + H2O + H(+). Its function is as follows. A cytochrome P450 monooxygenase involved in the metabolism of retinoates (RAs), the active metabolites of vitamin A, and critical signaling molecules in animals. RAs exist as at least four different isomers: all-trans-RA (atRA), 9-cis-RA, 13-cis-RA, and 9,13-dicis-RA, where atRA is considered to be the biologically active isomer, although 9-cis-RA and 13-cis-RA also have activity. Catalyzes the hydroxylation of atRA primarily at C-4 and C-18, thereby contributing to the regulation of atRA homeostasis and signaling. Hydroxylation of atRA limits its biological activity and initiates a degradative process leading to its eventual elimination. Involved in the convertion of atRA to all-trans-4-oxo-RA. Can oxidize all-trans-13,14-dihydroretinoate (DRA) to metabolites which could include all-trans-4-oxo-DRA, all-trans-4-hydroxy-DRA, all-trans-5,8-epoxy-DRA, and all-trans-18-hydroxy-DRA. Shows preference for the following substrates: atRA &gt; 9-cis-RA &gt; 13-cis-RA. Plays a central role in germ cell development: acts by degrading RAs in the developing testis, preventing STRA8 expression, thereby leading to delay of meiosis. Required for the maintenance of the undifferentiated state of male germ cells during embryonic development in Sertoli cells, inducing arrest in G0 phase of the cell cycle and preventing meiotic entry. Plays a role in skeletal development, both at the level of patterning and in the ossification of bone and the establishment of some synovial joints. Essential for postnatal survival. Also has a significant activity in oxidation of tazarotenic acid and may therefore metabolize that xenobiotic in vivo. This is Cytochrome P450 26B1 (Cyp26b1) from Rattus norvegicus (Rat).